A 321-amino-acid polypeptide reads, in one-letter code: Probable GDP-L-fucose synthase (321 aa).

Residue 8-14 participates in NADP(+) binding; the sequence is GGTGLVG. Tyrosine 136 functions as the Proton donor/acceptor in the catalytic mechanism. Residues lysine 140, 163–166, and histidine 179 each bind NADP(+); that span reads PCNI. Substrate contacts are provided by arginine 187, arginine 215, and aspartate 277.

This sequence belongs to the NAD(P)-dependent epimerase/dehydratase family. Fucose synthase subfamily. Homodimer.

The enzyme catalyses GDP-beta-L-fucose + NADP(+) = GDP-4-dehydro-alpha-D-rhamnose + NADPH + H(+). It functions in the pathway nucleotide-sugar biosynthesis; GDP-L-fucose biosynthesis via de novo pathway; GDP-L-fucose from GDP-alpha-D-mannose: step 2/2. Catalyzes the two-step NADP-dependent conversion of GDP-4-dehydro-6-deoxy-D-mannose to GDP-fucose, involving an epimerase and a reductase reaction. This chain is Probable GDP-L-fucose synthase (Gmer), found in Drosophila melanogaster (Fruit fly).